Consider the following 120-residue polypeptide: NAD(P)H-quinone oxidoreductase subunit 3 (120 aa).

3 consecutive transmembrane segments (helical) span residues 2-22 (FVLT…LVPV), 64-84 (MFAL…PWAV), and 89-109 (LGLL…VALV).

The protein belongs to the complex I subunit 3 family. In terms of assembly, NDH-1 can be composed of about 15 different subunits; different subcomplexes with different compositions have been identified which probably have different functions.

It localises to the cellular thylakoid membrane. It carries out the reaction a plastoquinone + NADH + (n+1) H(+)(in) = a plastoquinol + NAD(+) + n H(+)(out). The catalysed reaction is a plastoquinone + NADPH + (n+1) H(+)(in) = a plastoquinol + NADP(+) + n H(+)(out). Functionally, NDH-1 shuttles electrons from an unknown electron donor, via FMN and iron-sulfur (Fe-S) centers, to quinones in the respiratory and/or the photosynthetic chain. The immediate electron acceptor for the enzyme in this species is believed to be plastoquinone. Couples the redox reaction to proton translocation, and thus conserves the redox energy in a proton gradient. Cyanobacterial NDH-1 also plays a role in inorganic carbon-concentration. The protein is NAD(P)H-quinone oxidoreductase subunit 3 (ndhC) of Synechocystis sp. (strain ATCC 27184 / PCC 6803 / Kazusa).